Reading from the N-terminus, the 85-residue chain is MATKKAGGSTRNGRDSEAKRLGVKRFGGESVLAGSIIVRQRGTKFHAGSNVGMGRDHTLFATADGKVKFEVKGEKNRKYVSIIAE.

The disordered stretch occupies residues 1-20 (MATKKAGGSTRNGRDSEAKR).

Belongs to the bacterial ribosomal protein bL27 family.

The polypeptide is Large ribosomal subunit protein bL27 (Pasteurella multocida (strain Pm70)).